Reading from the N-terminus, the 200-residue chain is Probable molybdenum cofactor guanylyltransferase (200 aa).

GTP is bound by residues 9-11, Lys-21, Asp-69, and Asp-100; that span reads LAG. Position 100 (Asp-100) interacts with Mg(2+).

It belongs to the MobA family. Mg(2+) serves as cofactor.

The protein resides in the cytoplasm. The catalysed reaction is Mo-molybdopterin + GTP + H(+) = Mo-molybdopterin guanine dinucleotide + diphosphate. Its function is as follows. Transfers a GMP moiety from GTP to Mo-molybdopterin (Mo-MPT) cofactor (Moco or molybdenum cofactor) to form Mo-molybdopterin guanine dinucleotide (Mo-MGD) cofactor. In Bacillus cereus (strain ATCC 10987 / NRS 248), this protein is Probable molybdenum cofactor guanylyltransferase.